Reading from the N-terminus, the 3623-residue chain is Cubilin (3623 aa).

Positions 1–20 (MSSQFLWGFVTLLMIAELDG) are cleaved as a signal peptide. The propeptide at 21 to 32 (KTGKPEQRGQKR) is removed in mature form. The segment at 39–46 (PRMTTEEG) is interaction with AMN. A glycan (N-linked (GlcNAc...) asparagine) is linked at asparagine 95. The EGF-like 1 domain occupies 129–165 (ERKVCSSNPCLNGGTCVNLHDSFVCICPSQWKGLFCS). Disulfide bonds link cysteine 133/cysteine 144, cysteine 138/cysteine 153, cysteine 155/cysteine 164, cysteine 171/cysteine 187, cysteine 181/cysteine 196, cysteine 198/cysteine 207, cysteine 264/cysteine 277, cysteine 271/cysteine 286, and cysteine 289/cysteine 300. Residues 167 to 208 (DVNECVVYSGTPFGCQSGSTCVNTVGSFRCDCTPDTYGPQCA) form the EGF-like 2; calcium-binding domain. Positions 260–301 (DKDECSLQPSPCSEHAQCFNTQGSFYCGACPKGWQGNGYECQ) constitute an EGF-like 3; calcium-binding domain. Residues 302 to 345 (DINECEINNGGCSQAPLVPCLNTPGSFSCGNCPAGFSGDGRVCT) form the EGF-like 4; calcium-binding domain. 2 EGF-like domains span residues 346–385 (PVDICSIHNGGCHPEATCSSSPVLGSFLPVCTCPPGYTGN) and 395–430 (LSNICSRHPCVNGQCIETVSSYFCKCDSGWSGQNCT). Cystine bridges form between cysteine 350–cysteine 363, cysteine 357–cysteine 376, cysteine 399–cysteine 409, cysteine 404–cysteine 418, cysteine 420–cysteine 429, cysteine 436–cysteine 447, cysteine 441–cysteine 456, cysteine 458–cysteine 467, cysteine 474–cysteine 500, cysteine 527–cysteine 549, cysteine 590–cysteine 616, cysteine 643–cysteine 665, and cysteine 708–cysteine 734. Asparagine 428 is a glycosylation site (N-linked (GlcNAc...) asparagine). Residues 432 to 468 (NINDCSSNPCLNGGTCIDGINGFTCDCTSSWTGYYCQ) enclose the EGF-like 7; calcium-binding domain. CUB domains follow at residues 474 to 586 (CGGI…WEAK), 590 to 702 (CGGI…YLTT), 708 to 816 (CGGN…YQVA), 817 to 928 (CGGM…FSSD), 932 to 1042 (CGEV…YEAI), 1048 to 1161 (CLYD…WDGS), 1165 to 1277 (CGGN…FRQR), 1278 to 1389 (CDNV…WFTH), 1391 to 1506 (CGGE…WRAV), 1510 to 1619 (CGGI…FREE), 1620 to 1734 (CGGR…YSAS), 1738 to 1850 (CGGS…FKNI), 1852 to 1963 (GNNN…WFAV), 1978 to 2091 (CGGF…FHKS), 2092 to 2213 (CGGY…YEAK), 2217 to 2334 (CGGT…YSIA), 2336 to 2448 (CGGT…FKSS), 2452 to 2565 (CGGD…YTST), 2570 to 2687 (CGGF…YSFT), 2689 to 2801 (CGGI…WTTN), 2805 to 2919 (CGGT…FISR), 2920 to 3035 (CGRT…YRAI), 3037 to 3150 (CGGI…FRET), 3157 to 3274 (CGGY…YTFV), 3278 to 3393 (CGGT…YQIA), 3395 to 3507 (CNRE…WTSS), and 3511 to 3623 (CGGT…MWSS). N-linked (GlcNAc...) asparagine glycosylation occurs at asparagine 491. N-linked (GlcNAc...) asparagine glycans are attached at residues asparagine 711 and asparagine 749. Cysteine 761 and cysteine 779 are joined by a disulfide. Residue asparagine 781 is glycosylated (N-linked (GlcNAc...) asparagine). A disulfide bond links cysteine 817 and cysteine 842. Asparagine 857 is a glycosylation site (N-linked (GlcNAc...) asparagine). 2 disulfide bridges follow: cysteine 869–cysteine 891 and cysteine 932–cysteine 958. Asparagine 957 carries N-linked (GlcNAc...) asparagine glycosylation. Glutamate 980 provides a ligand contact to Ca(2+). N-linked (GlcNAc...) asparagine glycosylation occurs at asparagine 984. A disulfide bridge links cysteine 985 with cysteine 1005. Residues aspartate 988, aspartate 1027, and leucine 1030 each contribute to the Ca(2+) site. Cysteine 1048 and cysteine 1074 form a disulfide bridge. Positions 1096, 1105, and 1146 each coordinate Ca(2+). Cysteine 1165 and cysteine 1191 are oxidised to a cystine. The N-linked (GlcNAc...) asparagine glycan is linked to asparagine 1168. Glutamate 1213, aspartate 1221, aspartate 1262, glycine 1264, and glutamine 1265 together coordinate Ca(2+). Cysteines 1218 and 1240 form a disulfide. A disulfide bridge connects residues cysteine 1278 and cysteine 1306. Asparagine 1285, asparagine 1307, and asparagine 1319 each carry an N-linked (GlcNAc...) asparagine glycan. Residue glutamate 1328 coordinates Ca(2+). A glycan (N-linked (GlcNAc...) asparagine) is linked at asparagine 1332. A disulfide bond links cysteine 1333 and cysteine 1351. 3 residues coordinate Ca(2+): aspartate 1336, aspartate 1373, and isoleucine 1375. 2 cysteine pairs are disulfide-bonded: cysteine 1391–cysteine 1417 and cysteine 1444–cysteine 1466. A glycan (N-linked (GlcNAc...) asparagine) is linked at asparagine 1500. Cysteines 1510 and 1536 form a disulfide. N-linked (GlcNAc...) asparagine glycosylation is found at asparagine 1551, asparagine 1646, and asparagine 1671. An intrachain disulfide couples cysteine 1620 to cysteine 1647. 3 disulfides stabilise this stretch: cysteine 1675-cysteine 1697, cysteine 1738-cysteine 1764, and cysteine 1791-cysteine 1812. Residues asparagine 1802 and asparagine 1819 are each glycosylated (N-linked (GlcNAc...) asparagine). 3 disulfides stabilise this stretch: cysteine 1905/cysteine 1927, cysteine 1978/cysteine 2006, and cysteine 2032/cysteine 2054. N-linked (GlcNAc...) asparagine glycosylation is found at asparagine 2085 and asparagine 2117. Intrachain disulfides connect cysteine 2092/cysteine 2118 and cysteine 2217/cysteine 2247. The N-linked (GlcNAc...) asparagine glycan is linked to asparagine 2274. Intrachain disulfides connect cysteine 2275–cysteine 2297, cysteine 2336–cysteine 2363, cysteine 2390–cysteine 2411, cysteine 2452–cysteine 2478, and cysteine 2505–cysteine 2527. A glycan (N-linked (GlcNAc...) asparagine) is linked at asparagine 2400. N-linked (GlcNAc...) asparagine glycans are attached at residues asparagine 2531, asparagine 2581, and asparagine 2610. Cysteine 2570 and cysteine 2599 are disulfide-bonded. 7 cysteine pairs are disulfide-bonded: cysteine 2628-cysteine 2649, cysteine 2689-cysteine 2715, cysteine 2742-cysteine 2764, cysteine 2805-cysteine 2831, cysteine 2860-cysteine 2883, cysteine 2920-cysteine 2946, and cysteine 2977-cysteine 2999. Asparagine 2813, asparagine 2875, asparagine 2945, and asparagine 2989 each carry an N-linked (GlcNAc...) asparagine glycan. Residue threonine 3008 is modified to Phosphothreonine. 2 disulfide bridges follow: cysteine 3037-cysteine 3064 and cysteine 3091-cysteine 3113. Residues asparagine 3042, asparagine 3106, asparagine 3125, and asparagine 3165 are each glycosylated (N-linked (GlcNAc...) asparagine). Disulfide bonds link cysteine 3157–cysteine 3185 and cysteine 3215–cysteine 3237. N-linked (GlcNAc...) asparagine glycans are attached at residues asparagine 3268, asparagine 3283, and asparagine 3290. Cystine bridges form between cysteine 3278–cysteine 3306 and cysteine 3332–cysteine 3354. Asparagine 3357, asparagine 3400, and asparagine 3430 each carry an N-linked (GlcNAc...) asparagine glycan. An intrachain disulfide couples cysteine 3395 to cysteine 3421. 3 cysteine pairs are disulfide-bonded: cysteine 3448–cysteine 3470, cysteine 3511–cysteine 3537, and cysteine 3564–cysteine 3586. N-linked (GlcNAc...) asparagine glycosylation is present at asparagine 3533.

As to quaternary structure, interacts with AMN. Component of the cubam complex composed of one CUBN trimer and one AMN chain. The cubam complex can dimerize. Interacts with LRP2 in a dual-receptor complex in a calcium-dependent manner. Found in a complex with PID1/PCLI1, LRP1 and CUBNI. Interacts with LRP1 and PID1/PCLI1. In terms of processing, the precursor is cleaved by a trans-Golgi proteinase furin, removing a propeptide. N-glycosylated. In terms of tissue distribution, expressed to intestinal, renal and yalk sac apical membranes. In kidney, expressed in the proximal tubule.

The protein localises to the cell membrane. The protein resides in the endosome membrane. Its subcellular location is the lysosome membrane. Endocytic receptor which plays a role in lipoprotein, vitamin and iron metabolism by facilitating their uptake. Acts together with LRP2 to mediate endocytosis of high-density lipoproteins, GC, hemoglobin, ALB, TF and SCGB1A1. Acts together with AMN to mediate endocytosis of the CBLIF-cobalamin complex. Binds to ALB, MB, Kappa and lambda-light chains, TF, hemoglobin, GC, SCGB1A1, APOA1, high density lipoprotein, and the CBLIF-cobalamin complex. Ligand binding requires calcium. Serves as important transporter in several absorptive epithelia, including intestine, renal proximal tubules and embryonic yolk sac. May play an important role in the development of the peri-implantation embryo through internalization of APOA1 and cholesterol. Binds to LGALS3 at the maternal-fetal interface. This chain is Cubilin (Cubn), found in Rattus norvegicus (Rat).